A 231-amino-acid chain; its full sequence is Putative Nudix hydrolase FPV054 (231 aa).

Residues 74–217 enclose the Nudix hydrolase domain; sequence SKRRSFSEIL…SNEKYEYLHF (144 aa). The short motif at 125–146 is the Nudix box element; the sequence is GRVKNKESIYQCLSRELSEESD. Glutamate 131 is a Mg(2+) binding site. The Nucleophile role is filled by glutamate 140. Mg(2+)-binding residues include glutamate 144 and aspartate 165.

It belongs to the Nudix hydrolase family. Mg(2+) serves as cofactor. Requires Mn(2+) as cofactor.

Functionally, decapping enzyme required for the removal of the 5'-end m7GpppN cap tethered to viral and host mRNAs to allow their decay in cells. May therefore accelerate viral and cellular mRNA turnover to eliminate competing host mRNAs and allow stage-specific synthesis of viral proteins. Acceleration of the turnover of cellular transcripts may even promote the shutoff of host protein synthesis. Does not cleave unmethylated RNAs or RNAs shorter than 24 nucleotides. The polypeptide is Putative Nudix hydrolase FPV054 (Vertebrata (FPV)).